The sequence spans 209 residues: Large ribosomal subunit protein uL3 (209 aa).

This sequence belongs to the universal ribosomal protein uL3 family. Part of the 50S ribosomal subunit. Forms a cluster with proteins L14 and L19.

One of the primary rRNA binding proteins, it binds directly near the 3'-end of the 23S rRNA, where it nucleates assembly of the 50S subunit. The chain is Large ribosomal subunit protein uL3 from Nitratidesulfovibrio vulgaris (strain ATCC 29579 / DSM 644 / CCUG 34227 / NCIMB 8303 / VKM B-1760 / Hildenborough) (Desulfovibrio vulgaris).